Reading from the N-terminus, the 446-residue chain is Xanthone prenyltransferase A (446 aa).

R113, K199, Y201, R263, K265, Y267, Y369, and Y440 together coordinate dimethylallyl diphosphate.

The protein belongs to the tryptophan dimethylallyltransferase family.

It functions in the pathway secondary metabolite biosynthesis. In terms of biological role, xanthone prenyltransferase involved in the conversion of monodictyphenone to the prenyl xanthones such as emericellin, shamixanthone and epishamixanthone. Monodictyphenone is first converted to variecoxanthone A via a paeciloxanthone intermediate by the consecutive actions of the FAD-dependent monooxygenase mdpD and the xanthone prenyltransferase xptB. XptB catalyzes regular O-prenylation at the hydroxy group of C-7 of the xanthone ring. Variecoxanthone A is further prenylated to emericellin by xptA before being reduced to shamixanthone and epishamixanthone by the dehydrogenase xptC. The sequence is that of Xanthone prenyltransferase A from Emericella nidulans (strain FGSC A4 / ATCC 38163 / CBS 112.46 / NRRL 194 / M139) (Aspergillus nidulans).